A 192-amino-acid chain; its full sequence is A-type ATP synthase subunit E (192 aa).

This sequence belongs to the V-ATPase E subunit family. Has multiple subunits with at least A(3), B(3), C, D, E, F, H, I and proteolipid K(x).

It localises to the cell membrane. Component of the A-type ATP synthase that produces ATP from ADP in the presence of a proton gradient across the membrane. In Halorubrum lacusprofundi (strain ATCC 49239 / DSM 5036 / JCM 8891 / ACAM 34), this protein is A-type ATP synthase subunit E.